The primary structure comprises 86 residues: MDPYAVIMKPHVTEKSMNLIDQNNELAFVVMRKSTKKDVRRAFEELFAVKVERVNTQVTPRGQKIAYIKLAKEHSAEDIAVKLGVF.

It belongs to the universal ribosomal protein uL23 family. Part of the 50S ribosomal subunit. Contacts protein L29.

Its function is as follows. Binds to 23S rRNA. One of the proteins that surrounds the polypeptide exit tunnel on the outside of the ribosome. This Methanothermobacter thermautotrophicus (strain ATCC 29096 / DSM 1053 / JCM 10044 / NBRC 100330 / Delta H) (Methanobacterium thermoautotrophicum) protein is Large ribosomal subunit protein uL23.